Reading from the N-terminus, the 274-residue chain is Large ribosomal subunit protein uL2 (274 aa).

Positions 223–257 are disordered; the sequence is VAMNPVDHPHGGGEGRTSGGRHPVTPWGIPTKGYK.

Belongs to the universal ribosomal protein uL2 family. In terms of assembly, part of the 50S ribosomal subunit. Forms a bridge to the 30S subunit in the 70S ribosome.

Its function is as follows. One of the primary rRNA binding proteins. Required for association of the 30S and 50S subunits to form the 70S ribosome, for tRNA binding and peptide bond formation. It has been suggested to have peptidyltransferase activity; this is somewhat controversial. Makes several contacts with the 16S rRNA in the 70S ribosome. The sequence is that of Large ribosomal subunit protein uL2 from Geobacter sulfurreducens (strain ATCC 51573 / DSM 12127 / PCA).